The primary structure comprises 362 residues: tRNA/tmRNA (uracil-C(5))-methyltransferase (362 aa).

5 residues coordinate S-adenosyl-L-methionine: Gln186, Tyr214, Asn219, Glu235, and Asp295. Cys320 functions as the Nucleophile in the catalytic mechanism. The Proton acceptor role is filled by Glu354.

It belongs to the class I-like SAM-binding methyltransferase superfamily. RNA M5U methyltransferase family. TrmA subfamily.

It carries out the reaction uridine(54) in tRNA + S-adenosyl-L-methionine = 5-methyluridine(54) in tRNA + S-adenosyl-L-homocysteine + H(+). The enzyme catalyses uridine(341) in tmRNA + S-adenosyl-L-methionine = 5-methyluridine(341) in tmRNA + S-adenosyl-L-homocysteine + H(+). Its function is as follows. Dual-specificity methyltransferase that catalyzes the formation of 5-methyluridine at position 54 (m5U54) in all tRNAs, and that of position 341 (m5U341) in tmRNA (transfer-mRNA). The protein is tRNA/tmRNA (uracil-C(5))-methyltransferase of Ectopseudomonas mendocina (strain ymp) (Pseudomonas mendocina).